The sequence spans 446 residues: Thymidine phosphorylase (446 aa).

This sequence belongs to the thymidine/pyrimidine-nucleoside phosphorylase family. As to quaternary structure, homodimer.

The enzyme catalyses thymidine + phosphate = 2-deoxy-alpha-D-ribose 1-phosphate + thymine. Its pathway is pyrimidine metabolism; dTMP biosynthesis via salvage pathway; dTMP from thymine: step 1/2. In terms of biological role, the enzymes which catalyze the reversible phosphorolysis of pyrimidine nucleosides are involved in the degradation of these compounds and in their utilization as carbon and energy sources, or in the rescue of pyrimidine bases for nucleotide synthesis. This Psychromonas ingrahamii (strain DSM 17664 / CCUG 51855 / 37) protein is Thymidine phosphorylase.